The sequence spans 801 residues: MAETAAGLCRFKANYAVERKIEPFYKGGKAQLDQTGHYLFCVCGTKVNILDVASGALLRSLEQEDQEDITSFDLSPDDEVLVTASRALLLAQWAWREGTVTRLWKAIHTAPVASMAFDATSTLLATGGCDGAVRVWDIVQHYGTHHFRGSPGVVHLVAFHPDPTRLLLFSSAVDTSIRVWSLQDRSCLAVLTAHYSAVTSLSFSEGGHTMLSSGRDKICIVWDLQSYQTTRTVPVFESVEASVLLPEQPAPALGVKSSGLHFLTAGDQGILRVWEAASGQCVYTQPQMPGLRQELTHCTLARAADLLLTVTADHNLLLYEAHSLQLQKQFAGYSEEVLDVRFLGPSDSHIVVASNSPCLKVFELQTLACQILHGHTDIVLALDVFRKGWLFASCAKDQSIRIWKMNKAGQVACVAQGSGHTHSVGTICCSRLKESFLVTGSQDCTVKLWPLPEALLAKSTAADSGPVLLQAQTTRRCHDKDINSLAVSPNDKLLATGSQDRTAKLWALPQCQLLGVFTGHRRGLWNVQFSPTDQVLATASADGTIKLWALQDFSCLKTFEGHDASVLKVAFVSRGSQLLSSGSDGLLKLWTIKSNECVRTLDAHEDKVWGLHCSQLDDHAITGGSDSRIILWKDVTEAEQAEEQAKREEQVIKQQELDNLLHEKRYLRALGLAISLDRPHTVLTVIQAIRRDPEACEKLEATVLRLRRDQKEALLRFCVTWNTNSRHCHEAQAVLGVLLRHEAPEELLAYDGVRGSLEALLPYTERHFQRLSRTLQAATFLDFLWHNMKLSPCPAAAPPAL.

The residue at position 2 (Ala-2) is an N-acetylalanine. 13 WD repeats span residues 64-105, 107-146, 149-190, 193-232, 245-284, 290-329, 332-372, 374-413, 419-459, 477-516, 519-560, 562-602, and 604-642; these read EDQE…RLWK, IHTA…GTHH, GSPG…CLAV, AHYS…TTRT, LPEQ…CVYT, GLRQ…LQKQ, GYSE…CQIL, GHTD…QVAC, GHTH…LAKS, CHDK…LLGV, GHRR…KTFE, HDAS…RTLD, and HEDK…EQAE. Ser-257 carries the post-translational modification Phosphoserine. A Glycyl lysine isopeptide (Lys-Gly) (interchain with G-Cter in SUMO2) cross-link involves residue Lys-407.

In terms of assembly, part of the small subunit (SSU) processome, composed of more than 70 proteins and the RNA chaperone small nucleolar RNA (snoRNA) U3.

It is found in the nucleus. Its subcellular location is the nucleolus. In terms of biological role, part of the small subunit (SSU) processome, first precursor of the small eukaryotic ribosomal subunit. During the assembly of the SSU processome in the nucleolus, many ribosome biogenesis factors, an RNA chaperone and ribosomal proteins associate with the nascent pre-rRNA and work in concert to generate RNA folding, modifications, rearrangements and cleavage as well as targeted degradation of pre-ribosomal RNA by the RNA exosome. The polypeptide is Transducin beta-like protein 3 (Tbl3) (Mus musculus (Mouse)).